The chain runs to 129 residues: Putative protein p14 (129 aa).

The chain is Putative protein p14 (14) from Acyrthosiphon pisum secondary endosymbiont phage 1 (Bacteriophage APSE-1).